The primary structure comprises 198 residues: Peptidyl-tRNA hydrolase (198 aa).

Tyrosine 18 contributes to the tRNA binding site. The active-site Proton acceptor is the histidine 23. TRNA-binding residues include phenylalanine 69, asparagine 71, and asparagine 117.

Belongs to the PTH family. Monomer.

The protein localises to the cytoplasm. It catalyses the reaction an N-acyl-L-alpha-aminoacyl-tRNA + H2O = an N-acyl-L-amino acid + a tRNA + H(+). Functionally, hydrolyzes ribosome-free peptidyl-tRNAs (with 1 or more amino acids incorporated), which drop off the ribosome during protein synthesis, or as a result of ribosome stalling. In terms of biological role, catalyzes the release of premature peptidyl moieties from peptidyl-tRNA molecules trapped in stalled 50S ribosomal subunits, and thus maintains levels of free tRNAs and 50S ribosomes. In Idiomarina loihiensis (strain ATCC BAA-735 / DSM 15497 / L2-TR), this protein is Peptidyl-tRNA hydrolase.